Here is a 275-residue protein sequence, read N- to C-terminus: Phosphonoacetaldehyde hydrolase (275 aa).

The active-site Nucleophile is Asp15. Mg(2+) contacts are provided by Asp15 and Ala17. Catalysis depends on Lys56, which acts as the Schiff-base intermediate with substrate. Asp189 contributes to the Mg(2+) binding site.

This sequence belongs to the HAD-like hydrolase superfamily. PhnX family. Homodimer. Mg(2+) is required as a cofactor.

The enzyme catalyses phosphonoacetaldehyde + H2O = acetaldehyde + phosphate + H(+). Functionally, involved in phosphonate degradation. The sequence is that of Phosphonoacetaldehyde hydrolase from Pseudomonas fluorescens (strain SBW25).